The following is an 87-amino-acid chain: Colicin-E7 immunity protein (87 aa).

This sequence belongs to the colicins ColE2/ColE8/ColE9 and pyocins S1/S2 family.

Functionally, this protein is able to protect a cell, which harbors the plasmid ColE7 encoding colicin E7, against colicin E7, it binds specifically to the DNase-type colicin and inhibits its bactericidal activity. Dimeric ImmE7 may possess a RNase activity that cleaves its own mRNA at a specific site and thus autoregulates translational expression of the downstream ceiE7 gene as well as degradation of the upstream ceaE7 mRNA. This Escherichia coli protein is Colicin-E7 immunity protein (imm).